A 728-amino-acid chain; its full sequence is MITIVVIPTERFPWTDTNLLNSIDYRLNNIPKSNQRFAVYAPAWLRLQLEEAAVSLTPSQLLAAIQDIHVPVTSTFALLPKAKRFAQWLLDDPSSNIWHIPVTVLNVTATSKHPTSDIFNYVVGHVSPNAELATTASRVSGTQVVYTRTSKVLGAPLRLAAPTSYYSGYLSSQQLSHVYPSSWTPETFKKKEICFTILPSLTSPKTFLLDVDAPRDPSFPLSVMWPLLRNDAVKSHRLMPPNALLRRTVDPALKPEWSADVDPSFRALRLSRPRGANTSSCHNRHHVPVCDIQCALTPEPLNDSEKPPATHITIHAVPSDLLTVLDITVGKEYPLRLESGMYVPWMLMSLLMSDDVTLTGTRRSVKLETAHAAQRPFTQVKILRCVSARVTSVRAGPATYLNAVCLTLPKGSFKSTMIDTLPSLFPEWPVVSTTAIVDSDHLGDSLDPTFEQRFATMLETLPPGTVDQAIRVALATCPTADETALQLIVTSFNELYASCMTEAQRNRVPILTQQGRTLVFAHSDYEMLAANVPIQVIRGAIPIDHTVNIIARPNRVGGTALQLLLDYCYRMQASPIATMPAGALYRQLFGPWLRAKADCEQLTPVSLIAEVPARVMRAAGWTIQDDMPLIINVMRCYRNVDDQIDDVLTRTETSRAIITISADGIILVEYAPPLPLITLPSSILLPATYTATWLEPPRILLTGSNVSVTSGLSWAEVGSPLDVPPPGV.

Belongs to the reoviridae microtubule-associated protein family.

The protein localises to the virion. The protein resides in the host cytoplasm. It localises to the host cytoskeleton. Minor inner capsid component. Displays NTPase and RNA 5'-triphosphatase (RTPase) activities. May function as a cofactor of polymerase. Associates with microtubules and plays a role in the formation, structural organization and morphology of viral inclusions, where the assembly of cores and the replication of viral RNA occur. This chain is Microtubule-associated protein VP5 (S5), found in Ctenopharyngodon idella (Grass carp).